The chain runs to 484 residues: Acetaldehyde dehydrogenase (acetylating) (484 aa).

This sequence belongs to the aldehyde dehydrogenase family.

It catalyses the reaction acetaldehyde + NAD(+) + CoA = acetyl-CoA + NADH + H(+). It participates in organosulfur degradation; alkanesulfonate degradation. Its function is as follows. Involved in an anaerobic respiration pathway that converts the sulfonate taurine (2-aminoethanesulfonate) to ammonia, acetate and sulfide. Catalyzes the oxidation of acetaldehyde to acetyl-CoA in the presence of CoASH and NAD(+). Highly prefers NAD(+) over NADP(+). In Bilophila wadsworthia (strain 3_1_6), this protein is Acetaldehyde dehydrogenase (acetylating).